Consider the following 163-residue polypeptide: MERADNSNLEMLLETDWQLHQVYTGENIFFVIAKLGWLKTLHTLNVLIDEEIKPWLQQRNKLGDTCIHVAALANRGKQAIQLIEKLVEYGANLNTRRNCNGDTVLDIAVKNKDHELTVWLWKQPSINLQTEKFFHYVMDQMKLKESQENKMEILEAYMMQLFK.

ANK repeat units follow at residues 62-95 (LGDT…NLNT) and 100-130 (NGDT…NLQT).

Belongs to the polydnaviridae I-Kappa-B like protein family.

Its function is as follows. Suppresses the host immune response through NF-kappa-B inactivation. Possesses ankyrin repeat domains required for NF-kappa-B binding but lacks the regulatory regions required for dissociation from NF-kappa-B and degradation. Therefore, prevents host NF-kappa-B release and subsequent activation. The protein is I-Kappa-B like protein N3 (N6) of Microplitis demolitor (Parasitoid wasp).